Reading from the N-terminus, the 558-residue chain is Zeta-carotene desaturase, chloroplastic/chromoplastic (558 aa).

A chloroplast and chromoplast-targeting transit peptide spans 1–27 (MASSVVFAATGSLSVPPLKSRRFYVNS).

The protein belongs to the zeta carotene desaturase family. It depends on decylplastoquinone as a cofactor. Requires 6-decylubiquinone as cofactor. As to expression, highly expressed in leaves. Expressed at low levels in flowers and siliques.

The protein localises to the plastid. It localises to the chloroplast. The protein resides in the chromoplast. It carries out the reaction 9,9'-di-cis-zeta-carotene + 2 a quinone = 7,7',9,9'-tetra-cis-lycopene + 2 a quinol. It participates in carotenoid biosynthesis; lycopene biosynthesis. Plays a crucial role in plant growth and development. Is essential for the biosynthesis of carotenoids. Carotenoids are involved in different physiological processes, including coloration, photoprotection, biosynthesis of abscisic acid (ABA) and chloroplast biogenesis. Catalyzes the conversion of zeta-carotene to lycopene via the intermediary of neurosporene. It carries out two consecutive desaturations (introduction of double bonds) at positions C-7 and C-7'. Shows stereoselectivity toward trans C15-C15'zeta-carotene double bond. The zeta-carotene produced by the phytoene desaturase PDS has a C15-C15' double bond in the cis configuration and it requires isomerization before being recognized as substrate by ZDS. The main product is 7,9,7',9'-tetra-cis-lycopene (pro-lycopene). This chain is Zeta-carotene desaturase, chloroplastic/chromoplastic, found in Arabidopsis thaliana (Mouse-ear cress).